A 176-amino-acid chain; its full sequence is ATP-dependent protease subunit HslV (176 aa).

The active site involves threonine 5. 3 residues coordinate Na(+): serine 161, cysteine 164, and threonine 167.

The protein belongs to the peptidase T1B family. HslV subfamily. As to quaternary structure, a double ring-shaped homohexamer of HslV is capped on each side by a ring-shaped HslU homohexamer. The assembly of the HslU/HslV complex is dependent on binding of ATP.

Its subcellular location is the cytoplasm. It carries out the reaction ATP-dependent cleavage of peptide bonds with broad specificity.. With respect to regulation, allosterically activated by HslU binding. Functionally, protease subunit of a proteasome-like degradation complex believed to be a general protein degrading machinery. In Thermoanaerobacter pseudethanolicus (strain ATCC 33223 / 39E) (Clostridium thermohydrosulfuricum), this protein is ATP-dependent protease subunit HslV.